Here is a 103-residue protein sequence, read N- to C-terminus: Large ribosomal subunit protein bL21 (103 aa).

This sequence belongs to the bacterial ribosomal protein bL21 family. Part of the 50S ribosomal subunit. Contacts protein L20.

This protein binds to 23S rRNA in the presence of protein L20. The protein is Large ribosomal subunit protein bL21 of Haemophilus influenzae (strain PittEE).